A 255-amino-acid chain; its full sequence is Putative oxidoreductase YtkK (255 aa).

Residue 7–14 participates in NAD(+) binding; sequence TAGSKGLG.

It belongs to the short-chain dehydrogenases/reductases (SDR) family.

The protein is Putative oxidoreductase YtkK (ytkK) of Bacillus subtilis (strain 168).